We begin with the raw amino-acid sequence, 237 residues long: Glutathione-independent glyoxalase HSP31 (237 aa).

Catalysis depends on residues Cys-138, His-139, and Glu-170. Position 138 is a cysteine sulfinic acid (-SO2H) (Cys-138).

This sequence belongs to the peptidase C56 family. HSP31-like subfamily. In terms of assembly, homodimer. Post-translationally, cys-138 is easily oxidized to sulfinic acid.

Its subcellular location is the cytoplasm. The protein resides in the P-body. The catalysed reaction is methylglyoxal + H2O = (R)-lactate + H(+). Its function is as follows. Catalyzes the conversion of methylglyoxal (MG) to D-lactate in a single glutathione (GSH)-independent step. May play a role in detoxifying endogenously produced glyoxals. Involved in protection against reactive oxygen species (ROS). Important for viability in stationary phase. May negatively regulate TORC1 in response to nutrient limitation. The polypeptide is Glutathione-independent glyoxalase HSP31 (Saccharomyces cerevisiae (strain ATCC 204508 / S288c) (Baker's yeast)).